The primary structure comprises 627 residues: Signal recognition particle subunit SRP68 (627 aa).

The tract at residues 1–53 (MAAEKQVPGGGGGGGSGGGGGSGGGGSGGGRGAGGEENKENERPSAGSKANKE) is disordered. A compositionally biased stretch (gly residues) spans 8-33 (PGGGGGGGSGGGGGSGGGGSGGGRGA). Positions 34–43 (GGEENKENER) are enriched in basic and acidic residues. Phosphoserine occurs at positions 48 and 241. The RNA-binding stretch occupies residues 52–252 (KEFGDSLSLE…NIRYCAYNIG (201 aa)). K452 bears the N6-acetyllysine mark. Residues 588-610 (PLFFDLALNHVAFPPLEDKLEQK) form a required for interaction with SRP72 region.

The protein belongs to the SRP68 family. In terms of assembly, heterodimer with SRP72. SRP68/SRP72 heterodimer formation is stabilized by the presence of 7SL RNA. Component of a signal recognition particle (SRP) complex that consists of a 7SL RNA molecule of 300 nucleotides and six protein subunits: SRP72, SRP68, SRP54, SRP19, SRP14 and SRP9. Within the SRP complex, interacts (via C-terminus) with SRP72 (via N-terminus).

The protein localises to the cytoplasm. It is found in the nucleus. Its subcellular location is the nucleolus. The protein resides in the endoplasmic reticulum. Component of the signal recognition particle (SRP) complex, a ribonucleoprotein complex that mediates the cotranslational targeting of secretory and membrane proteins to the endoplasmic reticulum (ER). The SRP complex interacts with the signal sequence in nascent secretory and membrane proteins and directs them to the membrane of the ER. The SRP complex targets the ribosome-nascent chain complex to the SRP receptor (SR), which is anchored in the ER, where SR compaction and GTPase rearrangement drive cotranslational protein translocation into the ER. Binds the signal recognition particle RNA (7SL RNA), SRP72 binds to this complex subsequently. The SRP complex possibly participates in the elongation arrest function. The sequence is that of Signal recognition particle subunit SRP68 (SRP68) from Homo sapiens (Human).